The sequence spans 331 residues: ADP-L-glycero-D-manno-heptose-6-epimerase (331 aa).

NADP(+)-binding positions include 11-12 (FI), 32-33 (DN), lysine 39, lysine 54, 75-79 (EGACS), and asparagine 92. The Proton acceptor role is filled by tyrosine 139. An NADP(+)-binding site is contributed by lysine 143. Substrate is bound at residue asparagine 168. NADP(+) is bound by residues valine 169 and lysine 177. The active-site Proton acceptor is lysine 177. Residues arginine 179, histidine 186, 200-203 (FGEY), arginine 213, and tyrosine 292 each bind substrate.

Belongs to the NAD(P)-dependent epimerase/dehydratase family. HldD subfamily. In terms of assembly, homopentamer. Requires NADP(+) as cofactor.

It catalyses the reaction ADP-D-glycero-beta-D-manno-heptose = ADP-L-glycero-beta-D-manno-heptose. It participates in nucleotide-sugar biosynthesis; ADP-L-glycero-beta-D-manno-heptose biosynthesis; ADP-L-glycero-beta-D-manno-heptose from D-glycero-beta-D-manno-heptose 7-phosphate: step 4/4. Functionally, catalyzes the interconversion between ADP-D-glycero-beta-D-manno-heptose and ADP-L-glycero-beta-D-manno-heptose via an epimerization at carbon 6 of the heptose. This chain is ADP-L-glycero-D-manno-heptose-6-epimerase, found in Cupriavidus metallidurans (strain ATCC 43123 / DSM 2839 / NBRC 102507 / CH34) (Ralstonia metallidurans).